A 728-amino-acid chain; its full sequence is Plakophilin-1 (728 aa).

Residues 1 to 235 (MNHSPLKTAL…SFGHSRASSK (235 aa)) form a required for binding to single stranded DNA region. The tract at residues 1–287 (MNHSPLKTAL…ESAKQQVYQL (287 aa)) is required for interaction with EIF4A1. A Phosphoserine; by RIPK4 modification is found at serine 4. The segment at 48–69 (TVKRQKSKSSQSSTLSHSNRGS) is disordered. 2 phosphorylation in this region is required for cytoplasmic localization and protein stabilization regions span residues 54-69 (SKSS…NRGS) and 117-192 (RFSS…STCS). Phosphoserine is present on serine 119. At serine 120 the chain carries Phosphoserine; by RIPK4. A Phosphoserine modification is found at serine 122. A Phosphoserine; by RIPK4 modification is found at serine 143. Residues 161–270 (YCDPRGTLRK…KYQAIGAYYI (110 aa)) form a required for WNT-mediated nuclear localization region. ARM repeat units follow at residues 244–275 (SGLT…HTCF), 276–317 (QDES…NLVF), 318–360 (RSTP…NLSS), 361–412 (TDEL…GCLR), 413–443 (NLSS…NCVA), 505–536 (NYDC…LNLM), 537–583 (GKSK…IARL), 584–629 (LQSG…SHTG), and 630–694 (NTSN…DMWA).

Belongs to the beta-catenin family. In terms of assembly, part of a complex that contains DSG3, PKP1, YAP1 and YWHAG; the complex is required for localization of DSG3 and YAP1 to the cell membrane in keratinocytes. Interacts (via N-terminus) with KRT5/CK5, KRT8/CK8 (via rod domain), KRT15/CK15 and KRT18/CK18 (via rod domain) as part of intermediate filaments. Interacts with VIM (via rod domain). Interacts with DSP. Interacts with DES. Interacts with FXR1; the interaction may facilitate the binding of PKP1 to PKP2, PKP3 and DSP mRNA. Interacts (via N-terminus) with EIF4A1; the interaction promotes EIF4A1 recruitment to the cap-dependent translation complex and EIF4A1 ATPase activity. Interacts with TJP1/ZO-1; the interaction facilitates TJP1/ZO-1 localization to the plasma membrane. Interacts (when phosphorylated) with YWHAG; the interaction results in translocation of PKP1 to the cytoplasm and loss of intercellular adhesion in keratinocytes. Phosphorylated by AKT2; required for interaction with YWHAG and subsequent localization away from desmosomes to the cytoplasm. Phosphorylation of Ser-119 by AKT2 promotes PKP1-driven cap-dependent mRNA translation and decreases intercellular adhesion, phosphorylation is promoted by insulin. Phosphorylation by RIPK4 at the N-terminus is required for its role in differentiation of keratinocytes and DSG1 localization at cell junctions. As to expression, expressed in undifferentiated keratinocytes of the epidermis at birth, expression increases as differentiation proceeds (at protein level). Expressed in the cervical loop during early tooth differentiation, expression is then present between ameloblasts, at ameloblast-ameloblast junctions and in the stratum intermedium during pre-secretory and secretory stages of tooth development (at protein level).

The protein resides in the nucleus. It localises to the cytoplasm. It is found in the perinuclear region. Its subcellular location is the cell junction. The protein localises to the desmosome. The protein resides in the cell membrane. It localises to the stress granule. In terms of biological role, a component of desmosome cell-cell junctions which are required for positive regulation of cellular adhesion. Plays a role in desmosome protein expression regulation and localization to the desmosomal plaque, thereby maintaining cell sheet integrity and anchorage of desmosomes to intermediate filaments. Required for localization of DSG3 and YAP1 to the cell membrane in keratinocytes in response to mechanical strain, via the formation of an interaction complex composed of DSG3, YAP1, PKP1 and YWHAG. Positively regulates differentiation of keratinocytes, potentially via promoting localization of DSG1 at desmosome cell junctions. Required for calcium-independent development and maturation of desmosome plaques specifically at lateral cell-cell contacts in differentiating keratinocytes. Plays a role in the maintenance of DSG3 protein abundance, DSG3 clustering and localization of these clusters to the cell membrane in keratinocytes. May also promote keratinocyte proliferation and morphogenesis during postnatal development. Required for tight junction inside-out transepidermal barrier function of the skin, and is thereby involved in neonatal survival possibly via maintenance of hydration levels. Promotes Wnt-mediated proliferation and differentiation of ameloblasts, via facilitating TJP1/ZO-1 localization to tight junctions. Binds single-stranded DNA (ssDNA), and may thereby play a role in sensing DNA damage and promoting cell survival. Positively regulates cap-dependent translation and as a result cell proliferation, via recruitment of EIF4A1 to the initiation complex and promotion of EIF4A1 ATPase activity. Regulates the mRNA stability and protein abundance of desmosome components PKP2, PKP3, DSC2 and DSP, potentially via its interaction with FXR1. This Mus musculus (Mouse) protein is Plakophilin-1 (Pkp1).